A 316-amino-acid polypeptide reads, in one-letter code: Methionyl-tRNA formyltransferase (316 aa).

Residue Ser110–Pro113 coordinates (6S)-5,6,7,8-tetrahydrofolate.

This sequence belongs to the Fmt family.

It carries out the reaction L-methionyl-tRNA(fMet) + (6R)-10-formyltetrahydrofolate = N-formyl-L-methionyl-tRNA(fMet) + (6S)-5,6,7,8-tetrahydrofolate + H(+). Attaches a formyl group to the free amino group of methionyl-tRNA(fMet). The formyl group appears to play a dual role in the initiator identity of N-formylmethionyl-tRNA by promoting its recognition by IF2 and preventing the misappropriation of this tRNA by the elongation apparatus. The protein is Methionyl-tRNA formyltransferase of Halothermothrix orenii (strain H 168 / OCM 544 / DSM 9562).